Here is a 74-residue protein sequence, read N- to C-terminus: M-myrmeciitoxin-Mb1a (74 aa).

The signal sequence occupies residues 1–26; that stretch reads MKLSCLLLTLAIIVVLTIVHAPNVEA. The propeptide occupies 27–50; sequence KALADPESDAVGFADAVGEADPNA. Gln-73 carries the post-translational modification Glutamine amide.

Belongs to the formicidae venom precursor-01 superfamily. Ant pilosulin family. In terms of tissue distribution, expressed by the venom gland.

It localises to the secreted. Its function is as follows. Shows moderate activity against E.coli and S.aureus (MIC&lt;25 uM), slight activity against B.subtilis (MIC&lt;50 uM), and no activity against L.garvieae, P.aeruginosa, C.albicans, and S.cerevisiae. Has no hemolytic nor cytolytic activity. Causes an IgE-independent histamine release. This Myrmecia banksi (Jack jumper ant) protein is M-myrmeciitoxin-Mb1a.